Here is a 303-residue protein sequence, read N- to C-terminus: Proline dehydrogenase 2 (303 aa).

Lys-96 is a substrate binding site. Residue Asp-130 is part of the active site. 2 residues coordinate FAD: Met-131 and Gln-159. The active site involves Arg-180. FAD is bound by residues 183-185 (KGA) and 222-223 (TH). 284–285 (RR) provides a ligand contact to substrate.

This sequence belongs to the proline dehydrogenase family. Requires FAD as cofactor.

It carries out the reaction L-proline + a quinone = (S)-1-pyrroline-5-carboxylate + a quinol + H(+). Its pathway is amino-acid degradation; L-proline degradation into L-glutamate; L-glutamate from L-proline: step 1/2. In terms of biological role, converts proline to delta-1-pyrroline-5-carboxylate. Important for the use of proline as a sole carbon and energy source or a sole nitrogen source. In Bacillus subtilis (strain 168), this protein is Proline dehydrogenase 2.